We begin with the raw amino-acid sequence, 270 residues long: MEYIKKIALYMSVLLLIIFIGGCGNMKDEQKKEEQTNKTDSKEEQIKKSFAKTLDMYPIKNLEDLYDKEGYRDGEFKKGDKGMWTIYTDFAKSNKADELSNEGMVLYLDRNTRTAKGHYFVKTFYEKDKFPDRKKYKVEMKNNKIILLDKVEDPKLKKRIENFKFFGQYANLKELKNYNNGDVSINENVPSYDAKFKMSNKDENVKQLRSRYNIPTDKAPVLKMHIDGNLKGSSVGYKKLEIDFSKGEKSDLSVIDSLNFQPAKVDEDER.

The first 22 residues, 1-22 (MEYIKKIALYMSVLLLIIFIGG), serve as a signal peptide directing secretion. Residue cysteine 23 is the site of N-palmitoyl cysteine attachment. Cysteine 23 carries S-diacylglycerol cysteine lipidation.

It belongs to the staphylococcal tandem lipoprotein family.

The protein resides in the cell membrane. This is an uncharacterized protein from Staphylococcus aureus (strain MW2).